Consider the following 338-residue polypeptide: Adenylosuccinate synthetase (338 aa).

Residues 12–18 (GDEGKGK) and 42–44 (GHT) contribute to the GTP site. Asp-13 acts as the Proton acceptor in catalysis. Mg(2+)-binding residues include Asp-13 and Gly-42. IMP contacts are provided by residues 13–16 (DEGK), 40–43 (NAGH), Thr-127, Arg-141, Gln-179, Thr-194, and Arg-256. The active-site Proton donor is the His-43. Residue 252-258 (TVTGRRR) participates in substrate binding. GTP contacts are provided by residues Arg-258, 284 to 286 (CLD), and 324 to 326 (STG).

The protein belongs to the adenylosuccinate synthetase family. In terms of assembly, homodimer. It depends on Mg(2+) as a cofactor.

It is found in the cytoplasm. The enzyme catalyses IMP + L-aspartate + GTP = N(6)-(1,2-dicarboxyethyl)-AMP + GDP + phosphate + 2 H(+). The protein operates within purine metabolism; AMP biosynthesis via de novo pathway; AMP from IMP: step 1/2. In terms of biological role, plays an important role in the de novo pathway of purine nucleotide biosynthesis. Catalyzes the first committed step in the biosynthesis of AMP from IMP. The protein is Adenylosuccinate synthetase of Methanococcus vannielii (strain ATCC 35089 / DSM 1224 / JCM 13029 / OCM 148 / SB).